A 327-amino-acid chain; its full sequence is MKAPVRVAVTGAAGQISYSLLFRIAAGEMLGKDQPVILQMLEITPALEALKGVAMELDDCAFPLLAGMVCSDDPNVAFKDADYALLVGARPRGPGMERKDLLEANAAIFSVQGKAINDHASRDIKVLVVGNPANTNALIAQRNAPDINPRQFTAMMRLDHNRGLSQLAAKLDVTLEDITKMTIWGNHSATQYPDLFHTLVKGDVAVEQVEKDWYENDFIPTVQQRGAAIIKARGASSAASAANAAIFHMRDWALGTPENDWVSMGVYSDGSYGIEEGLIYSFPCVCKNGDWEIVQGLTIDEFSRAKMTATENELKEERDAVKSLLPA.

11–17 (GAAGQIS) contacts NAD(+). R92 and R98 together coordinate substrate. Residues N105, Q112, and 129-131 (VGN) each bind NAD(+). Substrate-binding residues include N131 and R162. H187 functions as the Proton acceptor in the catalytic mechanism.

This sequence belongs to the LDH/MDH superfamily. MDH type 2 family.

It catalyses the reaction (S)-malate + NAD(+) = oxaloacetate + NADH + H(+). Its function is as follows. Catalyzes the reversible oxidation of malate to oxaloacetate. This chain is Malate dehydrogenase, found in Saccharophagus degradans (strain 2-40 / ATCC 43961 / DSM 17024).